The sequence spans 1026 residues: Multidrug resistance protein MdtC (1026 aa).

A run of 11 helical transmembrane segments spans residues 15–35, 333–353, 360–380, 387–407, 431–451, 463–483, 528–548, 853–873, 897–917, 953–973, and 984–1004; these read ILIA…LPVA, EVEE…FLFL, LIPA…MYLC, LSLM…IVVL, VGFT…PLLL, FAVT…TLTP, LVGV…IAIP, LILI…LYES, LFNA…IGIV, PIMM…LSGG, and ITIV…TPVV.

It belongs to the resistance-nodulation-cell division (RND) (TC 2.A.6) family. MdtC subfamily. In terms of assembly, part of a tripartite efflux system composed of MdtA, MdtB and MdtC. MdtC forms a heteromultimer with MdtB.

It localises to the cell inner membrane. This chain is Multidrug resistance protein MdtC, found in Salmonella paratyphi A (strain ATCC 9150 / SARB42).